Consider the following 340-residue polypeptide: Phenylalanine--tRNA ligase alpha subunit (340 aa).

Glutamate 255 contributes to the Mg(2+) binding site.

Belongs to the class-II aminoacyl-tRNA synthetase family. Phe-tRNA synthetase alpha subunit type 1 subfamily. In terms of assembly, tetramer of two alpha and two beta subunits. Mg(2+) serves as cofactor.

It is found in the cytoplasm. The enzyme catalyses tRNA(Phe) + L-phenylalanine + ATP = L-phenylalanyl-tRNA(Phe) + AMP + diphosphate + H(+). The polypeptide is Phenylalanine--tRNA ligase alpha subunit (Exiguobacterium sibiricum (strain DSM 17290 / CCUG 55495 / CIP 109462 / JCM 13490 / 255-15)).